The primary structure comprises 338 residues: Probable tRNA pseudouridine synthase B (338 aa).

Residue Asp-78 is the Nucleophile of the active site. The PUA domain occupies 245–320 (LPKIILRDSA…IAASPIRVLM (76 aa)).

This sequence belongs to the pseudouridine synthase TruB family. Type 2 subfamily.

It catalyses the reaction uridine(55) in tRNA = pseudouridine(55) in tRNA. Could be responsible for synthesis of pseudouridine from uracil-55 in the psi GC loop of transfer RNAs. This is Probable tRNA pseudouridine synthase B from Methanosarcina mazei (strain ATCC BAA-159 / DSM 3647 / Goe1 / Go1 / JCM 11833 / OCM 88) (Methanosarcina frisia).